We begin with the raw amino-acid sequence, 152 residues long: 6,7-dimethyl-8-ribityllumazine synthase (152 aa).

Residues Phe-21, 55–57, and 79–81 contribute to the 5-amino-6-(D-ribitylamino)uracil site; these read AFE and CVI. 84 to 85 is a binding site for (2S)-2-hydroxy-3-oxobutyl phosphate; it reads AT. The active-site Proton donor is the His-87. Phe-112 is a binding site for 5-amino-6-(D-ribitylamino)uracil. (2S)-2-hydroxy-3-oxobutyl phosphate is bound at residue Arg-126.

Belongs to the DMRL synthase family. In terms of assembly, forms an icosahedral capsid composed of 60 subunits, arranged as a dodecamer of pentamers.

The catalysed reaction is (2S)-2-hydroxy-3-oxobutyl phosphate + 5-amino-6-(D-ribitylamino)uracil = 6,7-dimethyl-8-(1-D-ribityl)lumazine + phosphate + 2 H2O + H(+). It functions in the pathway cofactor biosynthesis; riboflavin biosynthesis; riboflavin from 2-hydroxy-3-oxobutyl phosphate and 5-amino-6-(D-ribitylamino)uracil: step 1/2. Functionally, catalyzes the formation of 6,7-dimethyl-8-ribityllumazine by condensation of 5-amino-6-(D-ribitylamino)uracil with 3,4-dihydroxy-2-butanone 4-phosphate. This is the penultimate step in the biosynthesis of riboflavin. The chain is 6,7-dimethyl-8-ribityllumazine synthase from Staphylococcus haemolyticus (strain JCSC1435).